The primary structure comprises 484 residues: uncharacterized protein (484 aa).

The helical transmembrane segment at 25 to 45 (PLSLFVVLAAVPLPIYFSGLL) threads the bilayer. The 36-residue stretch at 384-419 (LSFEETKELWVRADLDGNGVFDYEELKKIWNMTMVN) folds into the EF-hand domain. Ca(2+) is bound by residues Asp-397, Asp-399, Asn-401, and Glu-408.

It localises to the membrane. This is an uncharacterized protein from Arabidopsis thaliana (Mouse-ear cress).